The primary structure comprises 279 residues: NLP effector protein 9 (279 aa).

The first 19 residues, 1 to 19, serve as a signal peptide directing secretion; the sequence is MKISNLLGVLVVFLAVVKG. Positions 151 to 161 match the Conserved undecapeptide motif motif; it reads AIMYAWYFPDI. The N-linked (GlcNAc...) asparagine glycan is linked to asparagine 176.

This sequence belongs to the Necrosis inducing protein (NPP1) family.

It localises to the secreted. Secreted effector that acts as a pathogen-associated molecular pattern (PAMP) recognized by the plant immune system. Seems not to induce necrosis in Nicotiana benthamiana leaves. The protein is NLP effector protein 9 of Plasmopara viticola (Downy mildew of grapevine).